Here is a 465-residue protein sequence, read N- to C-terminus: Gamma-aminobutyric acid receptor subunit gamma-1 (465 aa).

Positions 1-20 (MGSGKAFLFSPSLLWSQTRG) are cleaved as a signal peptide. Residues 21 to 273 (VRLIFLLLTL…FDLSRRMGYF (253 aa)) lie on the Extracellular side of the membrane. N50 and N127 each carry an N-linked (GlcNAc...) asparagine glycan. A disulfide bridge links C188 with C202. N-linked (GlcNAc...) asparagine glycosylation is present at N245. A helical transmembrane segment spans residues 274–294 (TIQTYIPCILTVVLSWVSFWI). The Cytoplasmic portion of the chain corresponds to 295–300 (NKDAVP). Residues 301–320 (ARTSLGITTVLTMTTLSTIA) form a helical membrane-spanning segment. Over 321–328 (RKSLPKVS) the chain is Extracellular. Residues 329 to 349 (YVTAMDLFVSVCFIFVFAALM) traverse the membrane as a helical segment. At 350 to 444 (EYGTLHYFTS…RIAKIDSYSR (95 aa)) the chain is on the cytoplasmic side. The chain crosses the membrane as a helical span at residues 445 to 465 (IFFPTAFALFNLVYWVGYLYL).

The protein belongs to the ligand-gated ion channel (TC 1.A.9) family. Gamma-aminobutyric acid receptor (TC 1.A.9.5) subfamily. GABRG1 sub-subfamily. Heteropentamer, formed by a combination of alpha (GABRA1-6), beta (GABRB1-3), gamma (GABRG1-3), delta (GABRD), epsilon (GABRE), rho (GABRR1-3), pi (GABRP) and theta (GABRQ) chains, each subunit exhibiting distinct physiological and pharmacological properties. May be palmitoylated. As to expression, expressed in brain.

It is found in the postsynaptic cell membrane. Its subcellular location is the cell membrane. It catalyses the reaction chloride(in) = chloride(out). In terms of biological role, gamma subunit of the heteropentameric ligand-gated chloride channel gated by gamma-aminobutyric acid (GABA), a major inhibitory neurotransmitter in the brain. GABA-gated chloride channels, also named GABA(A) receptors (GABAAR), consist of five subunits arranged around a central pore and contain GABA active binding site(s) located at the alpha and beta subunit interface(s). When activated by GABA, GABAARs selectively allow the flow of chloride anions across the cell membrane down their electrochemical gradient. Chloride influx into the postsynaptic neuron following GABAAR opening decreases the neuron ability to generate a new action potential, thereby reducing nerve transmission. The sequence is that of Gamma-aminobutyric acid receptor subunit gamma-1 from Mus musculus (Mouse).